Reading from the N-terminus, the 347-residue chain is Dihydroorotase (347 aa).

Zn(2+) is bound by residues H17 and H19. Residues 19–21 and N45 contribute to the substrate site; that span reads HLR. K103, H140, and H178 together coordinate Zn(2+). N6-carboxylysine is present on K103. Substrate is bound at residue H140. L223 lines the substrate pocket. D251 lines the Zn(2+) pocket. D251 is a catalytic residue. Residues H255 and A267 each coordinate substrate.

This sequence belongs to the metallo-dependent hydrolases superfamily. DHOase family. Class II DHOase subfamily. In terms of assembly, homodimer. The cofactor is Zn(2+).

The catalysed reaction is (S)-dihydroorotate + H2O = N-carbamoyl-L-aspartate + H(+). Its pathway is pyrimidine metabolism; UMP biosynthesis via de novo pathway; (S)-dihydroorotate from bicarbonate: step 3/3. Its function is as follows. Catalyzes the reversible cyclization of carbamoyl aspartate to dihydroorotate. This is Dihydroorotase from Pectobacterium atrosepticum (strain SCRI 1043 / ATCC BAA-672) (Erwinia carotovora subsp. atroseptica).